The sequence spans 743 residues: 1,4-alpha-glucan branching enzyme GlgB 2 (743 aa).

Residues 1 to 23 are disordered; the sequence is MSERQGGQEQRTEADGMTTEGIS. The Nucleophile role is filled by aspartate 422. The active-site Proton donor is glutamate 475.

This sequence belongs to the glycosyl hydrolase 13 family. GlgB subfamily. Monomer.

The catalysed reaction is Transfers a segment of a (1-&gt;4)-alpha-D-glucan chain to a primary hydroxy group in a similar glucan chain.. Its pathway is glycan biosynthesis; glycogen biosynthesis. Catalyzes the formation of the alpha-1,6-glucosidic linkages in glycogen by scission of a 1,4-alpha-linked oligosaccharide from growing alpha-1,4-glucan chains and the subsequent attachment of the oligosaccharide to the alpha-1,6 position. This chain is 1,4-alpha-glucan branching enzyme GlgB 2, found in Xanthomonas euvesicatoria pv. vesicatoria (strain 85-10) (Xanthomonas campestris pv. vesicatoria).